The primary structure comprises 223 residues: MRPLGKGLLPAEELIRSNLGVGRSLRDCLSQSGKLAEELGSKRLKPAKFGTEGKERVEQRTERQRTGSSKEPRMQIICRRRWREPPPRLLWGCLMPRAQPLLHVTAYENTGHWERLASVVSSKTQQPTVISHSSISITFSHYPPATLDSFLVLEPIKLFPVSSLRSPLCLNCGSCRESIRISGELIGNAHSPAPPRTPELETLGWDKQAVLSGAQVILVCAEV.

Residues 40-70 (GSKRLKPAKFGTEGKERVEQRTERQRTGSSK) form a disordered region. Residues 51-70 (TEGKERVEQRTERQRTGSSK) show a composition bias toward basic and acidic residues.

This is an uncharacterized protein from Homo sapiens (Human).